We begin with the raw amino-acid sequence, 493 residues long: Glutamate--tRNA ligase (493 aa).

Residues 10–20 (PSPTGDPHVGT) carry the 'HIGH' region motif. The 'KMSKS' region motif lies at 251–255 (KLSKR). Residue K254 participates in ATP binding.

This sequence belongs to the class-I aminoacyl-tRNA synthetase family. Glutamate--tRNA ligase type 1 subfamily. In terms of assembly, monomer.

It is found in the cytoplasm. It carries out the reaction tRNA(Glu) + L-glutamate + ATP = L-glutamyl-tRNA(Glu) + AMP + diphosphate. Its function is as follows. Catalyzes the attachment of glutamate to tRNA(Glu) in a two-step reaction: glutamate is first activated by ATP to form Glu-AMP and then transferred to the acceptor end of tRNA(Glu). The polypeptide is Glutamate--tRNA ligase (Pseudomonas putida (strain ATCC 47054 / DSM 6125 / CFBP 8728 / NCIMB 11950 / KT2440)).